Consider the following 225-residue polypeptide: MFDDKLSKDLLLSARANNNLAVIRILQDTTSAINPNLQDENGKTALHWAVINLNPLITCYILKIEKVNVNIQDNTGFTVLHYLAKTISNLKFTTINGSFYKSNNYSILKTLFEYGIDVNIQDNKGNTALHYAICKNNFFFIEELLSNNASPFILNKAGFSILYKLNTKNCNFKDEIIESLHSKYPESIELGLVDNKIIIYDIHKLLYNLPYFMYEHNILILGNDA.

4 ANK repeats span residues 6-35 (LSKDLLLSARANNNLAVIRILQDTTSAINP), 41-71 (NGKTALHWAVINLNPLITCYILKIEKVNVNI), 75-120 (TGFT…DVNI), and 124-153 (KGNTALHYAICKNNFFFIEELLSNNASPFI).

The chain is Putative ankyrin repeat protein RBE_1025 from Rickettsia bellii (strain RML369-C).